The following is a 780-amino-acid chain: B3 domain-containing transcription repressor VAL2 (780 aa).

The TF-B3 DNA-binding region spans 286-387; sequence FEKVLSASDA…KLVMGYRKAT (102 aa). The CW-type zinc-finger motif lies at 515 to 565; the sequence is TGEQEQWVQCDACGKWRQLPVDILLPPKWSCSDNLLDPGRSSCSAPDELSP. 4 residues coordinate Zn(2+): cysteine 524, cysteine 527, cysteine 545, and cysteine 557. Disordered stretches follow at residues 577-608, 669-695, and 743-780; these read EFKR…AGIT, KRNK…TEVE, and NTAG…DPVN. Polar residues predominate over residues 584–603; sequence ASSNEKLNQSQDASALNSLG. The span at 674 to 686 shows a compositional bias: low complexity; the sequence is EAGQASQQAQSQS. Residues 743–765 show a composition bias toward polar residues; that stretch reads NTAGEQQSSDMVSTEHGSSSAAQ.

The protein resides in the nucleus. Transcriptional repressor of gene expression involved in embryonic pathways, such as LEC1, ABI3, and FUS3. Repressor of the sugar-inducible genes involved in the seed maturation program in seedlings. Plays an essential role in regulating the transition from seed maturation to seedling growth. Functionally redundant with VAL1/HSI2. In Arabidopsis thaliana (Mouse-ear cress), this protein is B3 domain-containing transcription repressor VAL2 (VAL2).